Consider the following 292-residue polypeptide: Ribosomal protein L11 methyltransferase (292 aa).

T143, G164, D186, and N228 together coordinate S-adenosyl-L-methionine.

Belongs to the methyltransferase superfamily. PrmA family.

It is found in the cytoplasm. It catalyses the reaction L-lysyl-[protein] + 3 S-adenosyl-L-methionine = N(6),N(6),N(6)-trimethyl-L-lysyl-[protein] + 3 S-adenosyl-L-homocysteine + 3 H(+). Functionally, methylates ribosomal protein L11. This is Ribosomal protein L11 methyltransferase from Aeromonas salmonicida (strain A449).